A 242-amino-acid polypeptide reads, in one-letter code: Murein peptide amidase A (242 aa).

In terms of domain architecture, Peptidase M14 spans 1–234 (MTVTRPRAER…FAMANLLRWH (234 aa)). Zn(2+) is bound by residues histidine 49, glutamate 52, and histidine 157. Glutamate 210 acts as the Proton donor/acceptor in catalysis.

This sequence belongs to the peptidase M14 family. In terms of assembly, homodimer. Zn(2+) serves as cofactor.

The protein resides in the cytoplasm. It carries out the reaction L-alanyl-gamma-D-glutamyl-meso-2,6-diaminopimelate + H2O = L-alanyl-D-glutamate + meso-2,6-diaminopimelate. The protein operates within cell wall degradation; peptidoglycan degradation. Involved in muropeptide degradation. Catalyzes the hydrolysis of the gamma-D-glutamyl-diaminopimelic acid (gamma-D-Glu-Dap) amide bond in the murein tripeptide L-alanyl-gamma-D-glutamyl-meso-diaminopimelic acid, leading to the formation of L-Ala-gamma-D-Glu and Dap. This Escherichia coli O157:H7 protein is Murein peptide amidase A.